The sequence spans 554 residues: Hedycaryol synthase (554 aa).

(2E,6E)-farnesyl diphosphate contacts are provided by Arg-270, Asp-307, Asp-311, Arg-449, and Asp-452. Positions 307 and 311 each coordinate Mg(2+). The DDXXD motif signature appears at 307 to 311; sequence DDTYD. Mg(2+) contacts are provided by Asp-452, Ser-456, and Glu-460.

Belongs to the terpene synthase family. Mg(2+) is required as a cofactor. In terms of tissue distribution, specifically expressed in flowers.

The catalysed reaction is (2E,6E)-farnesyl diphosphate + H2O = (2E,6E)-hedycaryol + diphosphate. The protein operates within secondary metabolite biosynthesis; terpenoid biosynthesis. Sesquiterpene synthase that catalyzes the formation of sesquiterpenes and sesquiterpenoid alcohols. Converts farnesyl diphosphate (FPP) to hedycaryol. Hedycaryol is likely to be one of the terpenes that attract insects for pollination of Camellia brevistyla. The sequence is that of Hedycaryol synthase from Camellia brevistyla.